Here is a 541-residue protein sequence, read N- to C-terminus: Chaperonin GroEL 1 (541 aa).

ATP-binding positions include 29–32, 86–90, Gly-413, 477–479, and Asp-493; these read TLGP, DGTTT, and NAA.

Belongs to the chaperonin (HSP60) family. In terms of assembly, forms a cylinder of 14 subunits composed of two heptameric rings stacked back-to-back. Interacts with the co-chaperonin GroES.

It localises to the cytoplasm. It catalyses the reaction ATP + H2O + a folded polypeptide = ADP + phosphate + an unfolded polypeptide.. Together with its co-chaperonin GroES, plays an essential role in assisting protein folding. The GroEL-GroES system forms a nano-cage that allows encapsulation of the non-native substrate proteins and provides a physical environment optimized to promote and accelerate protein folding. This is Chaperonin GroEL 1 from Nocardioides sp. (strain ATCC BAA-499 / JS614).